A 373-amino-acid polypeptide reads, in one-letter code: uncharacterized protein (373 aa).

The CP-type G domain occupies 14 to 168 (KKIVNKIIDE…LMDTPGVLEM (155 aa)). 117–124 (GYPNVGKS) provides a ligand contact to GTP.

This sequence belongs to the TRAFAC class YlqF/YawG GTPase family.

This is an uncharacterized protein from Methanocaldococcus jannaschii (strain ATCC 43067 / DSM 2661 / JAL-1 / JCM 10045 / NBRC 100440) (Methanococcus jannaschii).